Consider the following 327-residue polypeptide: Phospho-N-acetylmuramoyl-pentapeptide-transferase (327 aa).

The next 10 helical transmembrane spans lie at 3–23 (IALIAGIVTFILTIIGIPAFI), 51–71 (TMGGTVFLLTSVLASFVIGLF), 75–95 (LSNGLIMILFILVLYGVVGFL), 115–135 (LFLQLVGGVVFYFFYNQHGAG), 140–160 (IFTVPVQLGFLYVFFVLFWLI), 172–192 (IDGLASISVVISLVAYAVIAV), 197–217 (FDILIVIISMIGGLLGFFVFN), 223–243 (IFMGDVGSLALGGMLAAISIS), 248–268 (WTLLLIGIVYVFETTSVMMQV), and 306–326 (VDFFFWGIGIVGSLLTLAILY).

This sequence belongs to the glycosyltransferase 4 family. MraY subfamily. Mg(2+) is required as a cofactor.

The protein localises to the cell membrane. It carries out the reaction UDP-N-acetyl-alpha-D-muramoyl-L-alanyl-gamma-D-glutamyl-L-lysyl-D-alanyl-D-alanine + di-trans,octa-cis-undecaprenyl phosphate = Mur2Ac(oyl-L-Ala-gamma-D-Glu-L-Lys-D-Ala-D-Ala)-di-trans,octa-cis-undecaprenyl diphosphate + UMP. It participates in cell wall biogenesis; peptidoglycan biosynthesis. Its function is as follows. Catalyzes the initial step of the lipid cycle reactions in the biosynthesis of the cell wall peptidoglycan: transfers peptidoglycan precursor phospho-MurNAc-pentapeptide from UDP-MurNAc-pentapeptide onto the lipid carrier undecaprenyl phosphate, yielding undecaprenyl-pyrophosphoryl-MurNAc-pentapeptide, known as lipid I. In Streptococcus sanguinis (strain SK36), this protein is Phospho-N-acetylmuramoyl-pentapeptide-transferase.